The primary structure comprises 2147 residues: Non-reducing polyketide synthase albA (2147 aa).

The tract at residues 8–244 (YLFGDQTSDI…VKAPIHGPYH (237 aa)) is N-terminal acylcarrier protein transacylase domain (SAT). Residues 375–806 (CSKIAIIGMS…GGNTAILLED (432 aa)) form the Ketosynthase family 3 (KS3) domain. Catalysis depends on for beta-ketoacyl synthase activity residues C547, H682, and H724. Positions 912 to 1232 (FVFTGQGAQY…LSSLHLAGID (321 aa)) are malonyl-CoA:ACP transacylase (MAT) domain. S1001 serves as the catalytic For acyl/malonyl transferase activity. An N-terminal hotdog fold region spans residues 1286 to 1425 (HEFLTTAAQK…CTVRFFDCAA (140 aa)). The 313-residue stretch at 1286–1598 (HEFLTTAAQK…FQGLSRKILD (313 aa)) folds into the PKS/mFAS DH domain. The tract at residues 1290 to 1603 (TTAAQKVIET…RKILDTVLPP (314 aa)) is product template (PT) domain. H1326 functions as the Proton acceptor; for dehydratase activity in the catalytic mechanism. The segment at 1452–1598 (DAHRLGRGMV…FQGLSRKILD (147 aa)) is C-terminal hotdog fold. D1511 acts as the Proton donor; for dehydratase activity in catalysis. The tract at residues 1608–1637 (KGPARPAASAQKAAPAATSKSRASAPAPAK) is disordered. Residues 1610–1637 (PARPAASAQKAAPAATSKSRASAPAPAK) are compositionally biased toward low complexity. The 78-residue stretch at 1642–1719 (PSAPSLVKRA…DFKQFLAPMS (78 aa)) folds into the Carrier 1 domain. At S1679 the chain carries O-(pantetheine 4'-phosphoryl)serine. Positions 1719-1759 (SQGEASDGSTSDPESSSSFNGGSSTDESSAGSPVSSPPNEK) are disordered. Residues 1724–1747 (SDGSTSDPESSSSFNGGSSTDESS) are compositionally biased toward low complexity. Residues 1760–1837 (IEQHATMKEI…DVEDALGLKP (78 aa)) form the Carrier 2 domain. S1797 carries the post-translational modification O-(pantetheine 4'-phosphoryl)serine. The tract at residues 1873–2145 (SPHPRSTSIL…ELGSFIGNAM (273 aa)) is claisen cyclase domain. The active-site For Claisen cyclase activity is the S1963.

It catalyses the reaction 6 malonyl-CoA + acetyl-CoA + 6 H(+) = naphtopyrone YWA1 + 6 CO2 + 7 CoA + H2O. It participates in secondary metabolite biosynthesis. In terms of biological role, non-reducing polyketide synthase involved in the biosynthesis of bifonsecin B, a dimeric gamma-naphthopyrone. The first step in the biosynthesis of bifonsecin B is the production of gamma-naphthopyrone precursor YWA1 by the non-reducing polyketide synthase albA, via condensation of one acetyl-CoA starter unit with 6 malonyl-CoA units. YWA1 is then methylated by bfoE at position C-6 to yield foncesin which is further methylated at position C-8 by bfoD to produce fonsecin B. A key enzyme in the biosynthetic pathway is the cytochrome P450 monooxygenase bfoB which catalyzes the oxidative dimerization of fonsecin B to bifonsecin B. Bfob also catalyzes the oxidative dimerization of rubrofusarin B into nigerone. The stereoselectivity of bfoB is influenced by the two natural monomeric substrates; homodimerization of fonsecin B yields a stereochemically pure biaryl, M-foncerine B, while rubrofusarin B yields a mixture of enantiomers M- and P-nigerone. In Aspergillus brasiliensis (strain CBS 101740 / IMI 381727 / IBT 21946), this protein is Non-reducing polyketide synthase albA.